The chain runs to 205 residues: Cerebellin-3 (205 aa).

The first 32 residues, 1-32 (MLGAKPHWLPGPLHSPGLPLVLVLLALGAGWA), serve as a signal peptide directing secretion. One can recognise a C1q domain in the interval 67–205 (APPGRVAFAA…SFSGFLIFPL (139 aa)). A necessary for interaction with CBLN3, and homotrimerization region spans residues 72 to 205 (VAFAAVRSHH…SFSGFLIFPL (134 aa)). The N-linked (GlcNAc...) asparagine glycan is linked to Asn90.

As to quaternary structure, heterohexamer; disulfide-linked heterotrimers. Interacts with CBLN1. May also form oligomers with CBLN2 and CBLN4.

The protein resides in the endoplasmic reticulum. It is found in the golgi apparatus. The protein localises to the cis-Golgi network. Its subcellular location is the secreted. It localises to the synapse. May be involved in synaptic functions in the CNS. The sequence is that of Cerebellin-3 (CBLN3) from Homo sapiens (Human).